The primary structure comprises 455 residues: Bifunctional protein GlmU (455 aa).

Positions 1–230 (MANRFAVILA…FDETIGINDR (230 aa)) are pyrophosphorylase. UDP-N-acetyl-alpha-D-glucosamine-binding positions include 9-12 (LAAG), K23, Q73, and 78-79 (GT). D103 is a Mg(2+) binding site. 4 residues coordinate UDP-N-acetyl-alpha-D-glucosamine: G140, E155, N170, and N228. N228 serves as a coordination point for Mg(2+). The interval 231–251 (IALAEAEKIMKKRINEQHMRN) is linker. The interval 252-455 (GVSIIDPEQT…KEEYASKFKK (204 aa)) is N-acetyltransferase. Positions 333 and 351 each coordinate UDP-N-acetyl-alpha-D-glucosamine. H363 acts as the Proton acceptor in catalysis. Y366 and N377 together coordinate UDP-N-acetyl-alpha-D-glucosamine. Acetyl-CoA is bound by residues 386 to 387 (NY), A423, and R440.

The protein in the N-terminal section; belongs to the N-acetylglucosamine-1-phosphate uridyltransferase family. This sequence in the C-terminal section; belongs to the transferase hexapeptide repeat family. Homotrimer. It depends on Mg(2+) as a cofactor.

It localises to the cytoplasm. It carries out the reaction alpha-D-glucosamine 1-phosphate + acetyl-CoA = N-acetyl-alpha-D-glucosamine 1-phosphate + CoA + H(+). It catalyses the reaction N-acetyl-alpha-D-glucosamine 1-phosphate + UTP + H(+) = UDP-N-acetyl-alpha-D-glucosamine + diphosphate. Its pathway is nucleotide-sugar biosynthesis; UDP-N-acetyl-alpha-D-glucosamine biosynthesis; N-acetyl-alpha-D-glucosamine 1-phosphate from alpha-D-glucosamine 6-phosphate (route II): step 2/2. The protein operates within nucleotide-sugar biosynthesis; UDP-N-acetyl-alpha-D-glucosamine biosynthesis; UDP-N-acetyl-alpha-D-glucosamine from N-acetyl-alpha-D-glucosamine 1-phosphate: step 1/1. It functions in the pathway bacterial outer membrane biogenesis; LPS lipid A biosynthesis. Functionally, catalyzes the last two sequential reactions in the de novo biosynthetic pathway for UDP-N-acetylglucosamine (UDP-GlcNAc). The C-terminal domain catalyzes the transfer of acetyl group from acetyl coenzyme A to glucosamine-1-phosphate (GlcN-1-P) to produce N-acetylglucosamine-1-phosphate (GlcNAc-1-P), which is converted into UDP-GlcNAc by the transfer of uridine 5-monophosphate (from uridine 5-triphosphate), a reaction catalyzed by the N-terminal domain. The sequence is that of Bifunctional protein GlmU from Oceanobacillus iheyensis (strain DSM 14371 / CIP 107618 / JCM 11309 / KCTC 3954 / HTE831).